Consider the following 29-residue polypeptide: U1-pseudomyrmecitoxin-Pt1 subunit SS2 (29 aa).

This sequence belongs to the myrmexin family. In terms of assembly, heterodimer composed of subunit SS2 and subunit LS1 (U1-PSDTX-Pt1e), and heterodimer composed of subunit SS2 and LS2 (U1-PSDTX-Pt1c); disulfide-linked. In terms of tissue distribution, expressed by the venom gland.

The protein localises to the secreted. Functionally, this heterodimer may have anti-inflammatory properties, since the myrmexin complex (composed of 6 SS-LS heterodimers) inhibits carrageenin-induced edema in a dose-dependent manner (after subcutaneous injection into rats). This Pseudomyrmex triplarinus (Ant) protein is U1-pseudomyrmecitoxin-Pt1 subunit SS2.